Here is a 172-residue protein sequence, read N- to C-terminus: Ribosome maturation factor RimM (172 aa).

The PRC barrel domain occupies 96–168 (DGEFYYHEII…RIEVELMEGL (73 aa)).

Belongs to the RimM family. As to quaternary structure, binds ribosomal protein uS19.

It localises to the cytoplasm. Its function is as follows. An accessory protein needed during the final step in the assembly of 30S ribosomal subunit, possibly for assembly of the head region. Essential for efficient processing of 16S rRNA. May be needed both before and after RbfA during the maturation of 16S rRNA. It has affinity for free ribosomal 30S subunits but not for 70S ribosomes. In Streptococcus thermophilus (strain ATCC BAA-491 / LMD-9), this protein is Ribosome maturation factor RimM.